Here is a 156-residue protein sequence, read N- to C-terminus: Transcription antitermination protein NusB (156 aa).

It belongs to the NusB family.

Involved in transcription antitermination. Required for transcription of ribosomal RNA (rRNA) genes. Binds specifically to the boxA antiterminator sequence of the ribosomal RNA (rrn) operons. In Mycobacterium tuberculosis (strain CDC 1551 / Oshkosh), this protein is Transcription antitermination protein NusB.